A 410-amino-acid polypeptide reads, in one-letter code: Cysteine desulfurase IscS (410 aa).

Residues 80-81 (AT), asparagine 160, glutamine 188, and 208-210 (SGH) each bind pyridoxal 5'-phosphate. N6-(pyridoxal phosphate)lysine is present on lysine 211. Threonine 248 is a pyridoxal 5'-phosphate binding site. Residue cysteine 334 is the Cysteine persulfide intermediate of the active site. A [2Fe-2S] cluster-binding site is contributed by cysteine 334.

Belongs to the class-V pyridoxal-phosphate-dependent aminotransferase family. NifS/IscS subfamily. As to quaternary structure, homodimer. Forms a heterotetramer with IscU, interacts with other sulfur acceptors. Pyridoxal 5'-phosphate is required as a cofactor.

Its subcellular location is the cytoplasm. The catalysed reaction is (sulfur carrier)-H + L-cysteine = (sulfur carrier)-SH + L-alanine. It participates in cofactor biosynthesis; iron-sulfur cluster biosynthesis. In terms of biological role, master enzyme that delivers sulfur to a number of partners involved in Fe-S cluster assembly, tRNA modification or cofactor biosynthesis. Catalyzes the removal of elemental sulfur atoms from cysteine to produce alanine. Functions as a sulfur delivery protein for Fe-S cluster synthesis onto IscU, an Fe-S scaffold assembly protein, as well as other S acceptor proteins. The sequence is that of Cysteine desulfurase IscS from Rickettsia akari (strain Hartford).